A 614-amino-acid polypeptide reads, in one-letter code: Zinc metalloproteinase-disintegrin-like Eoc1 (614 aa).

The first 19 residues, 1 to 19 (MQVLLITISLAVLPYLGSS), serve as a signal peptide directing secretion. Positions 20–193 (IILESGIVND…KASQLNLTPE (174 aa)) are excised as a propeptide. Gln194 is modified (pyrrolidone carboxylic acid). Residues 202 to 398 (KHIKVAIVAD…KMPQCILIKP (197 aa)) form the Peptidase M12B domain. Residue Asn268 is glycosylated (N-linked (GlcNAc...) asparagine). Disulfide bonds link Cys313/Cys393, Cys353/Cys377, and Cys355/Cys360. His338 contributes to the Zn(2+) binding site. The active site involves Glu339. Residues His342 and His348 each contribute to the Zn(2+) site. N-linked (GlcNAc...) asparagine glycosylation occurs at Asn376. One can recognise a Disintegrin domain in the interval 406–492 (PPVCGNSLVE…ECPADQFQRN (87 aa)). Val408, Asn411, Leu413, Glu415, Glu418, and Asp421 together coordinate Ca(2+). 14 cysteine pairs are disulfide-bonded: Cys409/Cys438, Cys420/Cys433, Cys422/Cys428, Cys432/Cys455, Cys446/Cys452, Cys451/Cys477, Cys464/Cys484, Cys471/Cys503, Cys496/Cys508, Cys515/Cys565, Cys530/Cys576, Cys543/Cys553, Cys560/Cys602, and Cys596/Cys607. A D/ECD-tripeptide motif is present at residues 470-472 (ECD). Asn498 carries N-linked (GlcNAc...) asparagine glycosylation.

The protein belongs to the venom metalloproteinase (M12B) family. P-III subfamily. P-IIIc sub-subfamily. In terms of assembly, heterodimer; disulfide-linked. The cofactor is Zn(2+). As to expression, expressed by the venom gland.

Its subcellular location is the secreted. Functionally, this metalloproteinase hydrolyzes azocasein, and oxidized insulin B-chain. Also hydrolyzes the alpha-chain (FGA) and more slowly the beta-chain of fibrinogen (FGB), without affecting the gamma-chain. Does not cleave fibrin. Inhibits endothelial cell adhesion to extracellular matrix proteins such as fibrinogen, fibronectin, vitronectin, collagen I, and collagen IV. Induces apoptosis in vascular endothelial cells. This Echis ocellatus (Ocellated saw-scaled viper) protein is Zinc metalloproteinase-disintegrin-like Eoc1 (Svmp3-Eoc1).